Consider the following 531-residue polypeptide: SWI/SNF-related matrix-associated actin-dependent regulator of chromatin subfamily D member 2 (531 aa).

Residues 20–85 (AVAAALGAPP…MSPGSRMPMA (66 aa)) form a disordered region. Positions 34–45 (PGMLPSPALRGP) are enriched in low complexity. 2 positions are modified to asymmetric dimethylarginine: arginine 81 and arginine 104. Position 203 is a phosphoserine (serine 203). The tract at residues 205-226 (SKADGDNAGTAGTPGGTPAADK) is disordered. Low complexity predominate over residues 210–225 (DNAGTAGTPGGTPAAD). A Phosphothreonine modification is found at threonine 217. A Glycyl lysine isopeptide (Lys-Gly) (interchain with G-Cter in SUMO2) cross-link involves residue lysine 226. One can recognise an SWIB/MDM2 domain in the interval 306 to 383 (HQPPQYKLDP…PMKLAGLLQH (78 aa)).

Belongs to the SMARCD family. As to quaternary structure, component of the multiprotein chromatin-remodeling complexes SWI/SNF: SWI/SNF-A (BAF), SWI/SNF-B (PBAF) and related complexes. The canonical complex contains a catalytic subunit (either SMARCA4/BRG1/BAF190A or SMARCA2/BRM/BAF190B), and at least SMARCE1, ACTL6A/BAF53, SMARCC1/BAF155, SMARCC2/BAF170, and SMARCB1/SNF5/BAF47. Other subunits specific to each of the complexes may also be present permitting several possible combinations developmentally and tissue specific. Component of the BAF complex, which includes at least actin (ACTB), ARID1A/BAF250A, ARID1B/BAF250B, SMARCA2/BRM, SMARCA4/BRG1, ACTL6A/BAF53, ACTL6B/BAF53B, SMARCE1/BAF57, SMARCC1/BAF155, SMARCC2/BAF170, SMARCB1/SNF5/INI1, and one or more SMARCD1/BAF60A, SMARCD2/BAF60B, or SMARCD3/BAF60C. In muscle cells, the BAF complex also contains DPF3. Component of the SWI/SNF-B (PBAF) chromatin remodeling complex, at least composed of SMARCA4/BRG1, SMARCB1/BAF47/SNF5, ACTL6A/BAF53A or ACTL6B/BAF53B, SMARCE1/BAF57, SMARCD1/BAF60A, SMARCD2/BAF60B, perhaps SMARCD3/BAF60C, SMARCC1/BAF155, SMARCC2/BAF170, PBRM1/BAF180, ARID2/BAF200 and actin (ACTB). Interacts with UNKL. Interacts with CEBPE. In terms of processing, ubiquitinated through a signaling process involving RAC1 and the RING finger protein UNKL.

The protein resides in the nucleus. Its function is as follows. Involved in transcriptional activation and repression of select genes by chromatin remodeling (alteration of DNA-nucleosome topology). Component of SWI/SNF chromatin remodeling complexes that carry out key enzymatic activities, changing chromatin structure by altering DNA-histone contacts within a nucleosome in an ATP-dependent manner. Critical regulator of myeloid differentiation, controlling granulocytopoiesis and the expression of genes involved in neutrophil granule formation. The sequence is that of SWI/SNF-related matrix-associated actin-dependent regulator of chromatin subfamily D member 2 (Smarcd2) from Mus musculus (Mouse).